A 275-amino-acid chain; its full sequence is Probable CCR4-associated factor 1 homolog 7 (275 aa).

Residues Asp40, Glu42, Asp167, and Asp236 each coordinate a divalent metal cation.

It belongs to the CAF1 family. In terms of assembly, component of the CCR4-NOT complex, at least composed of CRR4 and CAF1 proteins. The cofactor is a divalent metal cation.

It is found in the nucleus. It localises to the cytoplasm. The catalysed reaction is Exonucleolytic cleavage of poly(A) to 5'-AMP.. Functionally, ubiquitous transcription factor required for a diverse set of processes. It is a component of the CCR4 complex involved in the control of gene expression. In Arabidopsis thaliana (Mouse-ear cress), this protein is Probable CCR4-associated factor 1 homolog 7 (CAF1-7).